The chain runs to 260 residues: MKFLLVFALALATTSAFQHPASIFELREGRIINGYEAYTGLFPYQAGLDITLQDQRRVWCGGSLIDNKWILTAAHCVHDAVSVVVYLGSAVQYEGEAVVNSERIISHSMFNPDTYLNDVALIKIPHVEYTDNIQPIRLPSGEELNNKFENIWATVSGWGQSNTDTVILQYTYNLVIDNDRCAQEYPPGIIVESTICGDTCDGKSPCFGDSGGPFVLSDKNLLIGVVSFVSGAGCESGKPVGFSRVTSYMDWIQQNTGIIF.

The N-terminal stretch at M1 to A16 is a signal peptide. The propeptide occupies F17 to R30. The Peptidase S1 domain maps to I31–G257. C60 and C76 are disulfide-bonded. Residues H75 and D118 each act as charge relay system in the active site. 2 disulfides stabilise this stretch: C181-C196 and C206-C234. The active-site Charge relay system is S210.

The protein belongs to the peptidase S1 family.

The protein localises to the secreted. It catalyses the reaction Hydrolysis of proteins including native collagen at Xaa-|-Ala bond leaving an N-terminal (75%) and a C-terminal (25%) fragment.. Its activity is regulated as follows. Inhibited by diisopropylfluorophosphate. This enzyme is a serine protease capable of degrading the native triple helix of collagen. Also cleaves the B chain of insulin at the 15-Leu-|-Try-16 and 22-Arg-|-Gly-23 bonds. Hydrolyzes casein, but not Px-Pro-Leu-Gly-Pro-DArg, BzArgNHPh, AcTyrNHPh, 2-naphthyl phosphate, 2-naphthyl butyrate, 2-naphthyl caprylate, 2-naphthyl myristate, L-leucine 2-2-naphthylamide, L-valine 2-naphthylamide, L-cysteine 2-naphthylamide or L-glutarylphenylalanine 2-naphthylamide. The polypeptide is Collagenase (Hypoderma lineatum (Early cattle grub)).